The following is a 281-amino-acid chain: Elongation factor 1-delta (281 aa).

At Ala-2 the chain carries N-acetylalanine. Lys-17 carries the post-translational modification N6-acetyllysine. Phosphoserine occurs at positions 37, 44, 60, 86, and 106. The interval 80 to 115 is leucine-zipper; sequence LIVRIASLEVENQNLRGVVQDLQQAISKLEVRLSTL. Lys-107 carries the N6-acetyllysine modification. Residues 115-132 show a composition bias toward polar residues; it reads LEKSSPTHRATAPQTQHV. Positions 115–172 are disordered; it reads LEKSSPTHRATAPQTQHVSPMRQVEPPAKKGATPAEDDEDNDIDLFGSDEEEEDKEAA. Lys-117 is subject to N6-acetyllysine; alternate. At Lys-117 the chain carries N6-succinyllysine; alternate. Ser-119 bears the Phosphoserine mark. At Thr-129 the chain carries Phosphothreonine. Ser-133 bears the Phosphoserine mark. Thr-147 carries the phosphothreonine modification. Residues 149-169 are compositionally biased toward acidic residues; sequence AEDDEDNDIDLFGSDEEEEDK. Residue Ser-162 is modified to Phosphoserine; by CK2. The segment at 173 to 281 is catalytic (GEF); that stretch reads RLREERLRQY…SVDIAAFNKI (109 aa).

This sequence belongs to the EF-1-beta/EF-1-delta family. In terms of assembly, EF-1 is composed of 4 subunits: alpha, beta, delta isoform 1, and gamma. Isoform 2 interacts with HSF1 and NFE2L2.

The protein resides in the nucleus. In terms of biological role, EF-1-beta and EF-1-delta stimulate the exchange of GDP bound to EF-1-alpha to GTP, regenerating EF-1-alpha for another round of transfer of aminoacyl-tRNAs to the ribosome. Regulates induction of heat-shock-responsive genes through association with heat shock transcription factors and direct DNA-binding at heat shock promoter elements (HSE). The polypeptide is Elongation factor 1-delta (Eef1d) (Rattus norvegicus (Rat)).